We begin with the raw amino-acid sequence, 185 residues long: MSEDPQSWSKERKNCERVKRALMSQSPVIIFLKTALDRLNCNIEAKDISCQPCDAQSTGGYIPGKGIVLCENRLYTKKMAENTIAHEMIHMFDDHRFEVDWNNLRHQACSEIRASSMSGECRWTKELRFGNIKTFRKHHQECVKRRATISVQGNPNCKSKEQAEAIVEEVFNSCFNDFRPFEKIY.

Residue histidine 86 coordinates a divalent metal cation. Glutamate 87 is a catalytic residue. Histidine 90 is an a divalent metal cation binding site.

Belongs to the peptidase M76 family.

Its subcellular location is the mitochondrion inner membrane. Functionally, has a dual role in the assembly of mitochondrial ATPase. Acts as a protease that removes N-terminal residues of mitochondrial ATPase CF(0) subunit 6 at the intermembrane space side. Also involved in the correct assembly of the membrane-embedded ATPase CF(0) particle, probably mediating association of subunit 6 with the subunit 9 ring. The polypeptide is Mitochondrial inner membrane protease atp23 (atp23) (Schizosaccharomyces pombe (strain 972 / ATCC 24843) (Fission yeast)).